A 320-amino-acid polypeptide reads, in one-letter code: Cytochrome c biogenesis protein CcsA (320 aa).

Helical transmembrane passes span Phe15–Ile35, Lys43–Ser63, Leu71–Phe91, Leu98–Leu118, Met143–Ile163, Val224–Asn244, Trp251–Leu271, and Ala285–Leu305.

Belongs to the CcmF/CycK/Ccl1/NrfE/CcsA family. As to quaternary structure, may interact with Ccs1.

The protein resides in the plastid. Its subcellular location is the chloroplast thylakoid membrane. In terms of biological role, required during biogenesis of c-type cytochromes (cytochrome c6 and cytochrome f) at the step of heme attachment. The polypeptide is Cytochrome c biogenesis protein CcsA (Panax ginseng (Korean ginseng)).